A 181-amino-acid chain; its full sequence is CASP-like protein 1F2 (181 aa).

At 1 to 18 (MADIETKSSQNQPLKTQN) the chain is on the cytoplasmic side. Residues 19–39 (IFIGAQIFLRIVVIAASFAST) form a helical membrane-spanning segment. Residues 40 to 70 (WLMLTNKQTIDIGGFVLDANYSYSPEFKFLS) are Extracellular-facing. Asparagine 59 carries an N-linked (GlcNAc...) asparagine glycan. A helical membrane pass occupies residues 71–91 (YANIVVGAFSFVSLLFLVLVG). The Cytoplasmic portion of the chain corresponds to 92–100 (RRSSNPTYY). The helical transmembrane segment at 101–121 (FILFLHDLALMSLVLGGCAAA) threads the bilayer. At 122–150 (TVIGSLGKYGNSHTGWMQICDHFGKFCKR) the chain is on the extracellular side. A helical transmembrane segment spans residues 151 to 171 (ATTSVAFSYFSLVCLLILTIT). Residues 172 to 181 (SASKSRQIQV) lie on the Cytoplasmic side of the membrane.

This sequence belongs to the Casparian strip membrane proteins (CASP) family. As to quaternary structure, homodimer and heterodimers.

It localises to the cell membrane. This chain is CASP-like protein 1F2, found in Populus trichocarpa (Western balsam poplar).